The following is a 413-amino-acid chain: 1-deoxy-D-xylulose 5-phosphate reductoisomerase (413 aa).

Residues T28, G29, S30, I31, G54, R55, N56, and N142 each coordinate NADPH. K143 serves as a coordination point for 1-deoxy-D-xylulose 5-phosphate. Residue E144 participates in NADPH binding. Mn(2+) is bound at residue D168. Positions 169, 170, 194, and 217 each coordinate 1-deoxy-D-xylulose 5-phosphate. E170 contacts Mn(2+). G223 provides a ligand contact to NADPH. S230, N235, K236, and E239 together coordinate 1-deoxy-D-xylulose 5-phosphate. Residue E239 participates in Mn(2+) binding.

This sequence belongs to the DXR family. The cofactor is Mg(2+). It depends on Mn(2+) as a cofactor.

It carries out the reaction 2-C-methyl-D-erythritol 4-phosphate + NADP(+) = 1-deoxy-D-xylulose 5-phosphate + NADPH + H(+). It functions in the pathway isoprenoid biosynthesis; isopentenyl diphosphate biosynthesis via DXP pathway; isopentenyl diphosphate from 1-deoxy-D-xylulose 5-phosphate: step 1/6. Functionally, catalyzes the NADPH-dependent rearrangement and reduction of 1-deoxy-D-xylulose-5-phosphate (DXP) to 2-C-methyl-D-erythritol 4-phosphate (MEP). The sequence is that of 1-deoxy-D-xylulose 5-phosphate reductoisomerase from Thermosynechococcus vestitus (strain NIES-2133 / IAM M-273 / BP-1).